Reading from the N-terminus, the 341-residue chain is Putative casein kinase I C03C10.2 (341 aa).

The 277-residue stretch at 50-326 (WSIEGVIGNG…KCLYSPKSLL (277 aa)) folds into the Protein kinase domain. ATP-binding positions include 56 to 64 (IGNGGYGQI) and Lys79. The active-site Proton acceptor is Asp173.

This sequence belongs to the protein kinase superfamily. CK1 Ser/Thr protein kinase family. Casein kinase I subfamily.

It catalyses the reaction L-seryl-[protein] + ATP = O-phospho-L-seryl-[protein] + ADP + H(+). The catalysed reaction is L-threonyl-[protein] + ATP = O-phospho-L-threonyl-[protein] + ADP + H(+). The sequence is that of Putative casein kinase I C03C10.2 from Caenorhabditis elegans.